A 212-amino-acid polypeptide reads, in one-letter code: Cytidylate kinase (212 aa).

An ATP-binding site is contributed by 7–15 (GPAASGKGT).

The protein belongs to the cytidylate kinase family. Type 1 subfamily.

It is found in the cytoplasm. The catalysed reaction is CMP + ATP = CDP + ADP. It carries out the reaction dCMP + ATP = dCDP + ADP. This is Cytidylate kinase from Nitrobacter winogradskyi (strain ATCC 25391 / DSM 10237 / CIP 104748 / NCIMB 11846 / Nb-255).